The chain runs to 190 residues: Xanthine phosphoribosyltransferase (190 aa).

Leu-20 and Asn-27 together coordinate xanthine. 5-phospho-alpha-D-ribose 1-diphosphate is bound at residue 128–132 (ANGKA). Lys-156 is a xanthine binding site.

Belongs to the purine/pyrimidine phosphoribosyltransferase family. Xpt subfamily. In terms of assembly, homodimer.

The protein resides in the cytoplasm. The catalysed reaction is XMP + diphosphate = xanthine + 5-phospho-alpha-D-ribose 1-diphosphate. Its pathway is purine metabolism; XMP biosynthesis via salvage pathway; XMP from xanthine: step 1/1. In terms of biological role, converts the preformed base xanthine, a product of nucleic acid breakdown, to xanthosine 5'-monophosphate (XMP), so it can be reused for RNA or DNA synthesis. The sequence is that of Xanthine phosphoribosyltransferase from Finegoldia magna (strain ATCC 29328 / DSM 20472 / WAL 2508) (Peptostreptococcus magnus).